We begin with the raw amino-acid sequence, 527 residues long: Probable malate:quinone oxidoreductase (527 aa).

It belongs to the MQO family. It depends on FAD as a cofactor.

It catalyses the reaction (S)-malate + a quinone = a quinol + oxaloacetate. It functions in the pathway carbohydrate metabolism; tricarboxylic acid cycle; oxaloacetate from (S)-malate (quinone route): step 1/1. The polypeptide is Probable malate:quinone oxidoreductase (Pectobacterium atrosepticum (strain SCRI 1043 / ATCC BAA-672) (Erwinia carotovora subsp. atroseptica)).